The chain runs to 454 residues: UDP-N-acetylmuramate--L-alanine ligase (454 aa).

ATP is bound at residue 112–118; the sequence is GTHGKTT.

It belongs to the MurCDEF family.

It is found in the cytoplasm. The catalysed reaction is UDP-N-acetyl-alpha-D-muramate + L-alanine + ATP = UDP-N-acetyl-alpha-D-muramoyl-L-alanine + ADP + phosphate + H(+). Its pathway is cell wall biogenesis; peptidoglycan biosynthesis. Cell wall formation. This Oleidesulfovibrio alaskensis (strain ATCC BAA-1058 / DSM 17464 / G20) (Desulfovibrio alaskensis) protein is UDP-N-acetylmuramate--L-alanine ligase.